The chain runs to 192 residues: tRNA (pseudouridine(54)-N(1))-methyltransferase (192 aa).

The S-adenosyl-L-methionine site is built by leucine 127 and cysteine 181.

The protein belongs to the methyltransferase superfamily. TrmY family. Homodimer.

Its subcellular location is the cytoplasm. It catalyses the reaction pseudouridine(54) in tRNA + S-adenosyl-L-methionine = N(1)-methylpseudouridine(54) in tRNA + S-adenosyl-L-homocysteine + H(+). In terms of biological role, specifically catalyzes the N1-methylation of pseudouridine at position 54 (Psi54) in tRNAs. This is tRNA (pseudouridine(54)-N(1))-methyltransferase from Methanocella arvoryzae (strain DSM 22066 / NBRC 105507 / MRE50).